The sequence spans 133 residues: Carbohydrate-binding protein AWN (133 aa).

Position 1 is an N-acetylalanine (alanine 1). 2 disulfides stabilise this stretch: cysteine 9–cysteine 30 and cysteine 53–cysteine 74. In terms of domain architecture, CUB spans 9–110 (CGGVLRDPPG…SPFHIYYYAD (102 aa)). Residues 73 to 110 (ICGGISLVFRSSSNIATIKYLRTSGQRASPFHIYYYAD) are heparin-binding.

It belongs to the spermadhesin family.

The protein resides in the secreted. In terms of biological role, mediates the binding of spermatozoa to component(s) of the egg's zona pellucida by a carbohydrate-binding mechanism. It is a secretory component of the male accessory glands being coated to the sperm surface at the time of ejaculation. The chain is Carbohydrate-binding protein AWN from Equus caballus (Horse).